Reading from the N-terminus, the 366-residue chain is Probable UDP-arabinopyranose mutase 2 (366 aa).

The DXD motif signature appears at 104–106 (DDD). N-linked (Glc...) arginine glycosylation is present at Arg-152.

The protein belongs to the RGP family. As to quaternary structure, homopentamer or homohexamer. The cofactor is Mn(2+). It depends on Mg(2+) as a cofactor. Post-translationally, reversibly glycosylated by UDP-glucose, UDP-xylose and UDP-galactose, but not UDP-mannose. As to expression, expressed in all tissues tested, including root, tuber, leaf, petiole, shoot, stolon and stem.

The protein localises to the secreted. The protein resides in the cell wall. It localises to the cell junction. Its subcellular location is the plasmodesma. It is found in the golgi apparatus. It catalyses the reaction UDP-beta-L-arabinofuranose = UDP-beta-L-arabinopyranose. Its function is as follows. Probable UDP-L-arabinose mutase involved in the biosynthesis of cell wall non-cellulosic polysaccharides. Was initially shown to possess an autoglycosylating activity which is dependent on the presence of UDP-glucose and manganese. The chain is Probable UDP-arabinopyranose mutase 2 from Solanum tuberosum (Potato).